We begin with the raw amino-acid sequence, 300 residues long: Spermatogenesis-associated serine-rich protein 1 (300 aa).

The span at 1-10 (MSPSMLTGNS) shows a compositional bias: polar residues. Disordered regions lie at residues 1-42 (MSPS…MTEV) and 64-91 (TPSG…LPRV). A compositionally biased stretch (basic and acidic residues) spans 27–42 (QLEKVPEKRDSGMTEV). Low complexity predominate over residues 64–85 (TPSGKSVSSSSSVETGPSVSEP). Phosphoserine is present on Ser-113.

This Homo sapiens (Human) protein is Spermatogenesis-associated serine-rich protein 1 (SPATS1).